Consider the following 303-residue polypeptide: Glycine--tRNA ligase alpha subunit (303 aa).

Belongs to the class-II aminoacyl-tRNA synthetase family. Tetramer of two alpha and two beta subunits.

It localises to the cytoplasm. It catalyses the reaction tRNA(Gly) + glycine + ATP = glycyl-tRNA(Gly) + AMP + diphosphate. The polypeptide is Glycine--tRNA ligase alpha subunit (glyQ) (Escherichia coli (strain K12)).